We begin with the raw amino-acid sequence, 296 residues long: 33 kDa chaperonin (296 aa).

2 disulfides stabilise this stretch: Cys-236–Cys-238 and Cys-269–Cys-272.

Belongs to the HSP33 family. In terms of processing, under oxidizing conditions two disulfide bonds are formed involving the reactive cysteines. Under reducing conditions zinc is bound to the reactive cysteines and the protein is inactive.

The protein resides in the cytoplasm. Redox regulated molecular chaperone. Protects both thermally unfolding and oxidatively damaged proteins from irreversible aggregation. Plays an important role in the bacterial defense system toward oxidative stress. The chain is 33 kDa chaperonin from Lactobacillus helveticus (strain DPC 4571).